The following is a 188-amino-acid chain: Cytochrome c oxidase assembly protein CtaG (188 aa).

At 1–8 the chain is on the cytoplasmic side; the sequence is MSKKSNKN. A helical; Signal-anchor for type II membrane protein membrane pass occupies residues 9 to 31; it reads LAFSLLGLIISMVLLSFASVPIY. Residues 32-188 lie on the Periplasmic side of the membrane; sequence NLFCKVTGYG…SSLRGNYVSN (157 aa).

The protein belongs to the COX11/CtaG family.

Its subcellular location is the cell inner membrane. Functionally, exerts its effect at some terminal stage of cytochrome c oxidase synthesis, probably by being involved in the insertion of the copper B into subunit I. This chain is Cytochrome c oxidase assembly protein CtaG, found in Rickettsia conorii (strain ATCC VR-613 / Malish 7).